The chain runs to 398 residues: Cholinephosphotransferase 1 (398 aa).

A2 is modified (N-acetylalanine). The Cytoplasmic segment spans residues 2–62; it reads AAGAGARPAP…LLQWIPLWIA (61 aa). A helical membrane pass occupies residues 63 to 83; it reads PNTITLFGLAINLFTTLVLIF. CDP-choline is bound at residue N64. Over 84–93 the chain is Lumenal; the sequence is YCPTVTEEAP. The helical transmembrane segment at 94–118 threads the bilayer; the sequence is YWTYLLCALGLFIYQSLDAIDGKQA. Residues D111 and D114 each coordinate Mg(2+). R119 serves as a coordination point for CDP-choline. Over 119–125 the chain is Cytoplasmic; the sequence is RRTNSCS. A helical transmembrane segment spans residues 126 to 150; it reads PLGELFDHGCDSLSTVFMAIGASIA. D132 lines the Mg(2+) pocket. The active-site Proton acceptor is the H133. Position 136 (D136) interacts with Mg(2+). Topologically, residues 151-160 are lumenal; it reads VRLGTHPDWL. The helical transmembrane segment at 161-179 threads the bilayer; that stretch reads FFCSFVGMFMFYCAHWQTY. The Cytoplasmic portion of the chain corresponds to 180–190; sequence VSGVLRFGRVD. A helical membrane pass occupies residues 191–207; the sequence is VTEIQVALVIVFLLSTF. Residues 208–222 are Lumenal-facing; sequence GGAMMWDYTIPILEI. The chain crosses the membrane as a helical span at residues 223-248; that stretch reads KLKILPVLGVVGGLIFSCSNYFHVIL. At 249–265 the chain is on the cytoplasmic side; that stretch reads HGGVGKNGSTIAGTSVL. Residues 266-281 traverse the membrane as a helical segment; it reads SPGLHIGLIIILAIMI. Residues 282 to 293 are Lumenal-facing; the sequence is YKKSATNVFEKH. Residues 294 to 316 form a helical membrane-spanning segment; it reads PCLYTLMFGCVFAKVAQKLVIAH. The Cytoplasmic portion of the chain corresponds to 317-329; it reads MTKSELYLQDTVF. Residues 330-339 form a helical membrane-spanning segment; sequence IGPGLLFLDQ. Residues 340 to 346 lie on the Lumenal side of the membrane; sequence YFNNFID. Residues 347-376 form a helical membrane-spanning segment; the sequence is EYVVLWIAMVITSFDMMIYFSSLCLQISRH. The Cytoplasmic portion of the chain corresponds to 377-398; it reads LHLSIFKTSYQQAPEQVHKHID.

This sequence belongs to the CDP-alcohol phosphatidyltransferase class-I family. Mg(2+) is required as a cofactor. The cofactor is Mn(2+).

Its subcellular location is the golgi apparatus membrane. It carries out the reaction CDP-choline + a 1,2-diacyl-sn-glycerol = a 1,2-diacyl-sn-glycero-3-phosphocholine + CMP + H(+). The enzyme catalyses 1-octadecanoyl-2-(5Z,8Z,11Z,14Z-eicosatetraenoyl)-sn-glycerol + CDP-choline = 1-octadecanoyl-2-(5Z,8Z,11Z,14Z-eicosatetraenoyl)-sn-glycero-3-phosphocholine + CMP + H(+). It catalyses the reaction 1-hexadecanoyl-2-(9Z-octadecenoyl)-sn-glycerol + CDP-choline = 1-hexadecanoyl-2-(9Z-octadecenoyl)-sn-glycero-3-phosphocholine + CMP + H(+). The catalysed reaction is 1-hexadecanoyl-2-(4Z,7Z,10Z,13Z,16Z,19Z-docosahexaenoyl)-sn-glycerol + CDP-choline = 1-hexadecanoyl-2-(4Z,7Z,10Z,13Z,16Z,19Z-docosahexaenoyl)-sn-glycero-3-phosphocholine + CMP + H(+). It carries out the reaction 1,2-dioctanoyl-sn-glycerol + CDP-choline = 1,2-dioctanoyl-sn-glycero-3-phosphocholine + CMP + H(+). It participates in phospholipid metabolism; phosphatidylcholine biosynthesis; phosphatidylcholine from phosphocholine: step 2/2. Catalyzes the final step of de novo phosphatidylcholine (PC) synthesis, i.e. the transfer of choline phosphate from CDP-choline to the free hydroxyl of a diacylglycerol (DAG), producing a PC. It thereby plays a central role in the formation and maintenance of vesicular membranes. The sequence is that of Cholinephosphotransferase 1 from Rattus norvegicus (Rat).